A 482-amino-acid chain; its full sequence is tRNA sulfurtransferase (482 aa).

The THUMP domain maps to 61 to 165 (AEVLEILTHT…NDRLNQVLAS (105 aa)). Residues 183–184 (LI), Lys265, Gly287, and Gln296 each bind ATP. A disulfide bond links Cys344 and Cys456. One can recognise a Rhodanese domain in the interval 404 to 482 (VEEHAIVLDI…GFNNVKVYRP (79 aa)). Cys456 (cysteine persulfide intermediate) is an active-site residue.

This sequence belongs to the ThiI family.

It localises to the cytoplasm. It catalyses the reaction [ThiI sulfur-carrier protein]-S-sulfanyl-L-cysteine + a uridine in tRNA + 2 reduced [2Fe-2S]-[ferredoxin] + ATP + H(+) = [ThiI sulfur-carrier protein]-L-cysteine + a 4-thiouridine in tRNA + 2 oxidized [2Fe-2S]-[ferredoxin] + AMP + diphosphate. The catalysed reaction is [ThiS sulfur-carrier protein]-C-terminal Gly-Gly-AMP + S-sulfanyl-L-cysteinyl-[cysteine desulfurase] + AH2 = [ThiS sulfur-carrier protein]-C-terminal-Gly-aminoethanethioate + L-cysteinyl-[cysteine desulfurase] + A + AMP + 2 H(+). Its pathway is cofactor biosynthesis; thiamine diphosphate biosynthesis. Its function is as follows. Catalyzes the ATP-dependent transfer of a sulfur to tRNA to produce 4-thiouridine in position 8 of tRNAs, which functions as a near-UV photosensor. Also catalyzes the transfer of sulfur to the sulfur carrier protein ThiS, forming ThiS-thiocarboxylate. This is a step in the synthesis of thiazole, in the thiamine biosynthesis pathway. The sulfur is donated as persulfide by IscS. In Vibrio campbellii (strain ATCC BAA-1116), this protein is tRNA sulfurtransferase.